We begin with the raw amino-acid sequence, 96 residues long: Acetolactate synthase isozyme 1 small subunit (96 aa).

Positions 10–83 (ILELTVRNHP…DVVKVQRNQS (74 aa)) constitute an ACT domain.

This sequence belongs to the acetolactate synthase small subunit family. Dimer of large and small chains.

The enzyme catalyses 2 pyruvate + H(+) = (2S)-2-acetolactate + CO2. It functions in the pathway amino-acid biosynthesis; L-isoleucine biosynthesis; L-isoleucine from 2-oxobutanoate: step 1/4. The protein operates within amino-acid biosynthesis; L-valine biosynthesis; L-valine from pyruvate: step 1/4. The chain is Acetolactate synthase isozyme 1 small subunit (ilvN) from Escherichia coli O157:H7.